The sequence spans 369 residues: Protein-glutamate methylesterase/protein-glutamine glutaminase (369 aa).

The 118-residue stretch at Lys-4–Leu-121 folds into the Response regulatory domain. Position 55 is a 4-aspartylphosphate (Asp-55). A compositionally biased stretch (low complexity) spans Ala-146 to Thr-171. The segment at Ala-146–Ala-175 is disordered. Positions Ser-176–Ala-369 constitute a CheB-type methylesterase domain. Residues Ser-188, His-215, and Asp-311 contribute to the active site.

Belongs to the CheB family. Post-translationally, phosphorylated by CheA. Phosphorylation of the N-terminal regulatory domain activates the methylesterase activity.

It localises to the cytoplasm. The catalysed reaction is [protein]-L-glutamate 5-O-methyl ester + H2O = L-glutamyl-[protein] + methanol + H(+). It catalyses the reaction L-glutaminyl-[protein] + H2O = L-glutamyl-[protein] + NH4(+). Functionally, involved in chemotaxis. Part of a chemotaxis signal transduction system that modulates chemotaxis in response to various stimuli. Catalyzes the demethylation of specific methylglutamate residues introduced into the chemoreceptors (methyl-accepting chemotaxis proteins or MCP) by CheR. Also mediates the irreversible deamidation of specific glutamine residues to glutamic acid. In Vibrio parahaemolyticus serotype O3:K6 (strain RIMD 2210633), this protein is Protein-glutamate methylesterase/protein-glutamine glutaminase.